The chain runs to 490 residues: Cardiolipin synthase A (490 aa).

Helical transmembrane passes span 4–24 (YLFT…IIIV) and 39–59 (AAWL…WFLL). PLD phosphodiesterase domains are found at residues 220-247 (MDLR…VDPY) and 403-430 (KKGL…DMRS). Active-site residues include His225, Lys227, Asp232, His408, Lys410, and Asp415.

Belongs to the phospholipase D family. Cardiolipin synthase subfamily. ClsA sub-subfamily.

It localises to the cell membrane. The enzyme catalyses 2 a 1,2-diacyl-sn-glycero-3-phospho-(1'-sn-glycerol) = a cardiolipin + glycerol. In terms of biological role, catalyzes the reversible phosphatidyl group transfer from one phosphatidylglycerol molecule to another to form cardiolipin (CL) (diphosphatidylglycerol) and glycerol. The chain is Cardiolipin synthase A from Buchnera aphidicola subsp. Baizongia pistaciae (strain Bp).